We begin with the raw amino-acid sequence, 95 residues long: Small ribosomal subunit protein uS19 (95 aa).

Belongs to the universal ribosomal protein uS19 family.

Protein S19 forms a complex with S13 that binds strongly to the 16S ribosomal RNA. The chain is Small ribosomal subunit protein uS19 from Roseiflexus castenholzii (strain DSM 13941 / HLO8).